The sequence spans 318 residues: MSFRLQPAPPARPNRCQLFGPGSRPALFEKMAASAADVINLDLEDSVAPDDKAQARANIIEAINGLDWGRKYLSVRINGLDTPFWYRDVVDLLEQAGDRLDQIMIPKVGCAADVYAVDALVTAIERAKGRTKPLSFEVIIESAAGIAHVEEIAASSPRLQAMSLGAADFAASMGMQTTGIGGTQENYYMLHDGQKHWSDPWHWAQAAIVAACRTHGILPVDGPFGDFSDDEGFRAQARRSATLGMVGKWAIHPKQVALANEVFTPSETAVTEAREILAAMDAAKARGEGATVYKGRLVDIASIKQAEVIVRQAEMISA.

Substrate is bound by residues F19, R24, K30, and R76. E141 and D168 together coordinate Mg(2+). Substrate is bound by residues 167 to 168 and 251 to 252; these read AD and IH.

It belongs to the HpcH/HpaI aldolase family. In terms of assembly, homohexamer. Dimer of trimers. The cofactor is Mg(2+). Mn(2+) is required as a cofactor.

It carries out the reaction (S)-malyl-CoA = glyoxylate + acetyl-CoA. The enzyme catalyses (2R,3S)-beta-methylmalyl-CoA = propanoyl-CoA + glyoxylate. Its function is as follows. Involved in the ethylmalonyl-CoA pathway for acetate assimilation. Catalyzes the reversible condensation of glyoxylate and acetyl-CoA to L-malyl-CoA and the reversible condensation of glyoxylate and propionyl-CoA to yield beta-methylmalyl-CoA. In Cereibacter sphaeroides (strain ATCC 17029 / ATH 2.4.9) (Rhodobacter sphaeroides), this protein is L-malyl-CoA/beta-methylmalyl-CoA lyase.